A 433-amino-acid polypeptide reads, in one-letter code: Protein translocase subunit SecY (433 aa).

A run of 10 helical transmembrane segments spans residues 17–37, 71–91, 117–137, 141–161, 184–204, 212–232, 268–288, 309–329, 366–386, and 388–408; these read IIFTIFVLIICRFGSFIPIAG, IFALAIMPYITASIIIQLMSV, LTVLLASLQAYGVAVSLESIV, GPVVIIPGLFFKITTVITLVV, LIIFIGIISGVPSAIISMFEL, PLVAIAVCAGVVILISIIIFF, GVIPPIFASSILLFPATLANF, IYILLYVALIMFFSFFYTAIV, LTVVGGIYLSVICIIPELLMN, and YVISLSLGGTSFLIVVNVVLD.

It belongs to the SecY/SEC61-alpha family. As to quaternary structure, component of the Sec protein translocase complex. Heterotrimer consisting of SecY, SecE and SecG subunits. The heterotrimers can form oligomers, although 1 heterotrimer is thought to be able to translocate proteins. Interacts with the ribosome. Interacts with SecDF, and other proteins may be involved. Interacts with SecA.

Its subcellular location is the cell inner membrane. Functionally, the central subunit of the protein translocation channel SecYEG. Consists of two halves formed by TMs 1-5 and 6-10. These two domains form a lateral gate at the front which open onto the bilayer between TMs 2 and 7, and are clamped together by SecE at the back. The channel is closed by both a pore ring composed of hydrophobic SecY resides and a short helix (helix 2A) on the extracellular side of the membrane which forms a plug. The plug probably moves laterally to allow the channel to open. The ring and the pore may move independently. The chain is Protein translocase subunit SecY from Rickettsia bellii (strain RML369-C).